The sequence spans 154 residues: Small heat shock protein C2 (154 aa).

One can recognise a sHSP domain in the interval 43–154; sequence STEKNLIPRT…GKTRKIEVKG (112 aa).

Belongs to the small heat shock protein (HSP20) family.

This is Small heat shock protein C2 (hspC2) from Rickettsia felis (strain ATCC VR-1525 / URRWXCal2) (Rickettsia azadi).